A 282-amino-acid chain; its full sequence is Energy-coupling factor transporter ATP-binding protein EcfA1 (282 aa).

The 235-residue stretch at 9–243 (IEIDNLSFKY…NDELLNIGLD (235 aa)) folds into the ABC transporter domain. An ATP-binding site is contributed by 43–50 (GHNGSGKS).

This sequence belongs to the ABC transporter superfamily. Energy-coupling factor EcfA family. In terms of assembly, forms a stable energy-coupling factor (ECF) transporter complex composed of 2 membrane-embedded substrate-binding proteins (S component), 2 ATP-binding proteins (A component) and 2 transmembrane proteins (T component).

It localises to the cell membrane. In terms of biological role, ATP-binding (A) component of a common energy-coupling factor (ECF) ABC-transporter complex. Unlike classic ABC transporters this ECF transporter provides the energy necessary to transport a number of different substrates. The sequence is that of Energy-coupling factor transporter ATP-binding protein EcfA1 from Ligilactobacillus salivarius (strain UCC118) (Lactobacillus salivarius).